Here is a 757-residue protein sequence, read N- to C-terminus: Mitofusin-2 (757 aa).

The Cytoplasmic segment spans residues 1 to 604 (MSLLFSRCNS…TQEELMVSMV (604 aa)). The tract at residues 30-94 (KHFVTAKKKI…VRGISEVLAR (65 aa)) is part of a helix bundle domain, formed by helices from N-terminal and C-terminal regions. The Dynamin-type G domain maps to 93 to 342 (ARRHMKVAFF…VRMFEFQNFE (250 aa)). Residues 103 to 110 (GRTSNGKS) are G1 motif. 106–111 (SNGKST) serves as a coordination point for GTP. Threonine 111 is subject to Phosphothreonine; by PINK1. The segment at 129 to 130 (TT) is G2 motif. The tract at residues 199 to 202 (DSPG) is G3 motif. 258–261 (NRWD) contributes to the GTP binding site. Residues 258–261 (NRWD) form a G4 motif region. A region of interest (G5 motif) is located at residue glutamate 288. Residues serine 305 and lysine 307 each coordinate GTP. The interval 359 to 385 (EQHTVRAKQIAEAVRLIMDSLHIAAQE) is part of a helix bundle domain, formed by helices from N-terminal and C-terminal regions. The stretch at 406 to 435 (KQLELLAQDYKLRIKQMTEEVERQVSTAMA) forms a coiled coil. Serine 442 carries the post-translational modification Phosphoserine; by PINK1. Residues 605–625 (TGLASLTSRTSMGILVVGGVV) form a helical membrane-spanning segment. Tryptophan 626 is a topological domain (mitochondrial intermembrane). Residues 627-647 (KAVGWRLIALSFGLYGLLYVY) form a helical membrane-spanning segment. Topologically, residues 648–757 (ERLTWTTRAK…FIHQYLQPSR (110 aa)) are cytoplasmic. Residues 696-738 (FAHLCQQVDITRDNLEQEIAAMNKKVEALDSLQSKAKLLRNKA) adopt a coiled-coil conformation. Residues 722–753 (EALDSLQSKAKLLRNKAGWLDSELNMFIHQYL) form a part of a helix bundle domain, formed by helices from N-terminal and C-terminal regions region.

Belongs to the TRAFAC class dynamin-like GTPase superfamily. Dynamin/Fzo/YdjA family. Mitofusin subfamily. In terms of assembly, forms homomultimers and heteromultimers with MFN1. Oligomerization is essential for mitochondrion fusion. Interacts with VAT1. Interacts with STOML2; may form heterooligomers. Interacts (phosphorylated) with PRKN. Interacts with EIF2AK3. Interacts with THG1L; THG1L probably functions as a guanyl-nucleotide exchange factor/GEF, activating MFN2. In terms of processing, phosphorylated by PINK1. Post-translationally, ubiquitinated by non-degradative ubiquitin by PRKN, promoting mitochondrial fusion; deubiquitination by USP30 inhibits mitochondrial fusion. Ubiquitinated by HUWE1 when dietary stearate (C18:0) levels are low; ubiquitination inhibits mitochondrial fusion. Ubiquitous. In brain, it is more expressed than MFN1, while it is expressed at a weaker level than MFN1 in heart and testis. Expressed at high level in elongating spermatids of seminiferous tubules. Expression is markedly down-regulated in highly proliferative vascular smooth muscle cells (VSMCs) from the genetic hypertensive animal model SHR, as well as in balloon-injured Wistar Kyoto arteries.

It is found in the mitochondrion outer membrane. The enzyme catalyses GTP + H2O = GDP + phosphate + H(+). Functionally, mitochondrial outer membrane GTPase that mediates mitochondrial clustering and fusion. Mitochondria are highly dynamic organelles, and their morphology is determined by the equilibrium between mitochondrial fusion and fission events. Overexpression induces the formation of mitochondrial networks. Membrane clustering requires GTPase activity and may involve a major rearrangement of the coiled coil domains. Plays a central role in mitochondrial metabolism and may be associated with obesity and/or apoptosis processes. Plays an important role in the regulation of vascular smooth muscle cell proliferation. Involved in the clearance of damaged mitochondria via selective autophagy (mitophagy). Is required for PRKN recruitment to dysfunctional mitochondria. Involved in the control of unfolded protein response (UPR) upon ER stress including activation of apoptosis and autophagy during ER stress. Acts as an upstream regulator of EIF2AK3 and suppresses EIF2AK3 activation under basal conditions. The chain is Mitofusin-2 (Mfn2) from Rattus norvegicus (Rat).